A 311-amino-acid polypeptide reads, in one-letter code: Immune-associated nucleotide-binding protein 7 (311 aa).

Residues 14–222 form the AIG1-type G domain; that stretch reads KQAENIVLVG…YTDDTYHMIK (209 aa). The tract at residues 23-30 is G1; sequence GRTGNGKS. GTP contacts are provided by residues 23–31 and S44; that span reads GRTGNGKSA. Residues 50-54 form a G2 region; sequence GVTMK. The segment at 72-75 is G3; sequence DTPG. The interval 142-145 is G4; that stretch reads TGGD. The interval 181–183 is G5; that stretch reads DNK. N182 contributes to the GTP binding site. The stretch at 218–295 forms a coiled coil; it reads YHMIKEESEK…TQENNELNLA (78 aa).

Belongs to the TRAFAC class TrmE-Era-EngA-EngB-Septin-like GTPase superfamily. AIG1/Toc34/Toc159-like paraseptin GTPase family. IAN subfamily. As to expression, ubiquitous.

This Arabidopsis thaliana (Mouse-ear cress) protein is Immune-associated nucleotide-binding protein 7.